We begin with the raw amino-acid sequence, 210 residues long: NADH dehydrogenase [ubiquinone] iron-sulfur protein 8, mitochondrial (210 aa).

A mitochondrion-targeting transit peptide spans M1–A34. 4Fe-4S ferredoxin-type domains follow at residues R102–E131 and T141–N170. C111, C114, C117, C121, C150, C153, C156, and C160 together coordinate [4Fe-4S] cluster.

Belongs to the complex I 23 kDa subunit family. Core subunit of respiratory chain NADH dehydrogenase (Complex I) which is composed of 45 different subunits. This is a component of the iron-sulfur (IP) fragment of the enzyme. Interacts with RAB5IF. [4Fe-4S] cluster serves as cofactor.

Its subcellular location is the mitochondrion inner membrane. It carries out the reaction a ubiquinone + NADH + 5 H(+)(in) = a ubiquinol + NAD(+) + 4 H(+)(out). Its function is as follows. Core subunit of the mitochondrial membrane respiratory chain NADH dehydrogenase (Complex I) which catalyzes electron transfer from NADH through the respiratory chain, using ubiquinone as an electron acceptor. Essential for the catalytic activity and assembly of complex I. This chain is NADH dehydrogenase [ubiquinone] iron-sulfur protein 8, mitochondrial (NDUFS8), found in Pongo abelii (Sumatran orangutan).